The chain runs to 206 residues: Recombination protein RecR (206 aa).

Residues 60 to 75 form a C4-type zinc finger; sequence CAMCNTFCEGGLCDIC. In terms of domain architecture, Toprim spans 83–178; sequence RRLMVVHMPA…KVSRLSQGIP (96 aa).

Belongs to the RecR family.

May play a role in DNA repair. It seems to be involved in an RecBC-independent recombinational process of DNA repair. It may act with RecF and RecO. The polypeptide is Recombination protein RecR (Neisseria meningitidis serogroup B (strain ATCC BAA-335 / MC58)).